The primary structure comprises 333 residues: MIDLRSDTVTRPSRAMLEAMMAAPVGDDVYGDDPTVNALQDYAAELSGKEAAIFLPTGTQANLVALLSHCERGEEYIVGQAAHNYLFEAGGAAVLGSIQPQPIDAAADGTLPLDKVAMKIKPDDIHFARTKLLSLENTHNGKVLPREYLKDAWEFTRERNLALHVDGARIFNAVVAYGSELKELTQYCDSFTICLSKGLGTPVGSLLVGNRDYIKRAIRWRKMTGGGMRQSGILAAAGMYALKNNVARLQEDHDNAAWMAEQLREAGADVMRQDTNMLFVRVGEENAAALGEYMKARNVLINASPIVRLVTHLDVSREQLAEVAAHWRAFLAR.

At Lys-197 the chain carries N6-(pyridoxal phosphate)lysine.

Belongs to the threonine aldolase family. As to quaternary structure, homotetramer. It depends on pyridoxal 5'-phosphate as a cofactor.

The enzyme catalyses L-threonine = acetaldehyde + glycine. It catalyses the reaction L-allo-threonine = acetaldehyde + glycine. Catalyzes the cleavage of L-allo-threonine and L-threonine to glycine and acetaldehyde. L-threo-phenylserine and L-erythro-phenylserine are also good substrates. This Escherichia coli O157:H7 protein is Low specificity L-threonine aldolase (ltaE).